The chain runs to 368 residues: Proline-rich protein 5-like (368 aa).

The residue at position 28 (serine 28) is a Phosphoserine. A disordered region spans residues 312–368 (LGEESGGEDKCLLLQPSFPPPHRQCSSEPNITDGPDEPEQGATGSQEDSELNCASLS). The segment covering 353 to 368 (ATGSQEDSELNCASLS) has biased composition (polar residues).

Belongs to the PROTOR family. As to quaternary structure, interacts with the mammalian target of rapamycin complex 2 (mTORC2) which contains MTOR, MLST8, PRR5, RICTOR, MAPKAP1 and DEPTOR. Interacts with RFFL. Interacts (via C-terminus) with ZFP36 (via C-terminus); this interaction may accelerate ZFP36-mediated mRNA decay during stress. Interacts with RICTOR. In terms of processing, ubiquitinated. Ubiquitination by RFFL promotes proteasomal degradation of PRR5L thereby modifying the substrate-specific activity of the mTORC2 complex. Ubiquitination by RFFL is stimulated by LPA/lysophosphatidic acid.

Associates with the mTORC2 complex that regulates cellular processes including survival and organization of the cytoskeleton. Regulates the activity of the mTORC2 complex in a substrate-specific manner preventing for instance the specific phosphorylation of PKCs and thereby controlling cell migration. Plays a role in the stimulation of ZFP36-mediated mRNA decay of several ZFP36-associated mRNAs, such as TNF-alpha and GM-CSF, in response to stress. Required for ZFP36 localization to cytoplasmic stress granule (SG) and P-body (PB) in response to stress. In Bos taurus (Bovine), this protein is Proline-rich protein 5-like (PRR5L).